Reading from the N-terminus, the 281-residue chain is Ribonuclease HII (281 aa).

The interval 1–46 (MIRDTKQPIKVPAKPASRSGGKAKTVKPKTIKPKTSAKAAAAKPAS) is disordered. Low complexity predominate over residues 33-46 (PKTSAKAAAAKPAS). The RNase H type-2 domain occupies 73–261 (WPIAGCDEAG…VAAAWQKIEG (189 aa)). The a divalent metal cation site is built by Asp-79, Glu-80, and Asp-170.

This sequence belongs to the RNase HII family. The cofactor is Mn(2+). Requires Mg(2+) as cofactor.

The protein resides in the cytoplasm. It catalyses the reaction Endonucleolytic cleavage to 5'-phosphomonoester.. Its function is as follows. Endonuclease that specifically degrades the RNA of RNA-DNA hybrids. This is Ribonuclease HII from Rhodopseudomonas palustris (strain TIE-1).